Here is a 214-residue protein sequence, read N- to C-terminus: MSIRTILFDLDGTLIDTNTLIKASFEHTFKEYNLNFSNEEILKFNGPPLVDTFNKIDETKADRMITTFREHNIREHDNFVTAFPHVYDTLEELQNRNISLGIVSTKMRHTVHMGLELTGISKFFSTIITYDDVTHAKPHPEPVQMAMQKLGAHPEHTLMVGDNHHDIVSGQRANVQTAAVAWSLKDTNYLKSFHPDYIIEDIKDIITIVGDSFA.

Catalysis depends on Asp9, which acts as the Nucleophile.

Belongs to the HAD-like hydrolase superfamily. PpaX family. Requires Mg(2+) as cofactor.

It catalyses the reaction diphosphate + H2O = 2 phosphate + H(+). Functionally, hydrolyzes pyrophosphate formed during P-Ser-HPr dephosphorylation by HPrK/P. Might play a role in controlling the intracellular pyrophosphate pool. The protein is Pyrophosphatase PpaX of Oceanobacillus iheyensis (strain DSM 14371 / CIP 107618 / JCM 11309 / KCTC 3954 / HTE831).